The sequence spans 283 residues: Nucleotide-binding protein DR_1434 (283 aa).

Residue 8–15 (GLSGSGKS) coordinates ATP. GTP is bound at residue 57–60 (DTRT).

It belongs to the RapZ-like family.

Displays ATPase and GTPase activities. This chain is Nucleotide-binding protein DR_1434, found in Deinococcus radiodurans (strain ATCC 13939 / DSM 20539 / JCM 16871 / CCUG 27074 / LMG 4051 / NBRC 15346 / NCIMB 9279 / VKM B-1422 / R1).